The chain runs to 474 residues: PTS system N-acetylmuramic acid-specific EIIBC component (474 aa).

Residues 1–89 (MAKEISSELL…SELLGEAPVQ (89 aa)) form the PTS EIIB type-1 domain. Residues 1 to 123 (MAKEISSELL…LAKFATIFTP (123 aa)) are Cytoplasmic-facing. Catalysis depends on cysteine 29, which acts as the Phosphocysteine intermediate; for EIIB activity. The region spanning 115-474 (AKFATIFTPL…LFGCRNVNLD (360 aa)) is the PTS EIIC type-1 domain. Residues 124 to 144 (LIPGFIAAGLLLGIATLIATV) form a helical membrane-spanning segment. Topologically, residues 145–157 (MHVPADAQGTLPD) are periplasmic. Residues 158-178 (ALNFMKVFSKGLFTFLVILVG) form a helical membrane-spanning segment. Over 179–180 (YN) the chain is Cytoplasmic. A helical transmembrane segment spans residues 181-201 (AAQAFGGTGVNGAIIAALFLL). Over 202–217 (GYNPAATTGYYAGFHD) the chain is Periplasmic. The helical transmembrane segment at 218–238 (FFGLPIDPRGNIIGVLIAAWA) threads the bilayer. Topologically, residues 239–260 (CARIEGMVRRFMPDDLDMLLTS) are cytoplasmic. The chain crosses the membrane as a helical span at residues 261–281 (LITLLITATLAYLIIMPLGGW). Topologically, residues 282–301 (LFEGMSWLFMHLNSNPLGCA) are periplasmic. The helical transmembrane segment at 302 to 322 (VLAGLFLIAVVFGVHQGFIPV) threads the bilayer. Topologically, residues 323 to 334 (YLALMDSQGFNS) are cytoplasmic. A helical transmembrane segment spans residues 335 to 355 (LFPILSMAGAGQVGAALALYW). Residues 356–368 (RAQPHSALRSQVR) are Periplasmic-facing. A helical transmembrane segment spans residues 369–389 (GAIIPGLLGVGEPLIYGVTLP). At 390 to 393 (RMKP) the chain is on the cytoplasmic side. A helical transmembrane segment spans residues 394-414 (FITACLGGAAGGLFIGLIAWW). Over 415 to 440 (GLPMGLNSAFGPSGLVALPLMTSAQG) the chain is Periplasmic. The chain crosses the membrane as a helical span at residues 441 to 461 (ILPAMAVYAGGILVAWVCGFI). At 462–474 (FTTLFGCRNVNLD) the chain is on the cytoplasmic side.

It is found in the cell inner membrane. The enzyme catalyses N-acetyl-beta-D-muramate(out) + N(pros)-phospho-L-histidyl-[protein] = N-acetyl-beta-D-muramate 6-phosphate(in) + L-histidyl-[protein]. The phosphoenolpyruvate-dependent sugar phosphotransferase system (sugar PTS), a major carbohydrate active transport system, catalyzes the phosphorylation of incoming sugar substrates concomitantly with their translocation across the cell membrane. This system is involved in N-acetylmuramic acid (MurNAc) transport, yielding cytoplasmic MurNAc-6-P. Is also able to take up anhydro-N-acetylmuramic acid (anhMurNAc), but cannot phosphorylate the carbon 6, probably because of the 1,6-anhydro ring. This is PTS system N-acetylmuramic acid-specific EIIBC component (murP) from Escherichia coli O157:H7.